Reading from the N-terminus, the 146-residue chain is Mitochondrial pyruvate carrier 3 (146 aa).

The transit peptide at 1 to 20 directs the protein to the mitochondrion; that stretch reads MSASAFNFAFRRFWNSETGP. Transmembrane regions (helical) follow at residues 23 to 39, 55 to 71, and 78 to 94; these read VHFW…FAGL, LSLL…SFVI, and LASV…YHLT.

Belongs to the mitochondrial pyruvate carrier (MPC) (TC 2.A.105) family. In terms of assembly, the functional 150 kDa pyruvate import complex is a heteromer of MPC1 and either MPC2 or MPC3.

It localises to the mitochondrion. It is found in the mitochondrion inner membrane. Functionally, mediates the uptake of pyruvate into mitochondria. This is Mitochondrial pyruvate carrier 3 from Saccharomyces cerevisiae (strain ATCC 204508 / S288c) (Baker's yeast).